Reading from the N-terminus, the 248-residue chain is UPF0736 protein BCB4264_A1231 (248 aa).

The protein belongs to the UPF0736 family.

The chain is UPF0736 protein BCB4264_A1231 from Bacillus cereus (strain B4264).